The primary structure comprises 110 residues: uncharacterized protein (110 aa).

This is an uncharacterized protein from Acidianus convivator (ABV).